The sequence spans 445 residues: Tol-Pal system protein TolB (445 aa).

The N-terminal stretch at 1–26 (MLNRRNFIRTTSALAASTALPGYAFG) is a signal peptide.

Belongs to the TolB family. In terms of assembly, the Tol-Pal system is composed of five core proteins: the inner membrane proteins TolA, TolQ and TolR, the periplasmic protein TolB and the outer membrane protein Pal. They form a network linking the inner and outer membranes and the peptidoglycan layer.

It is found in the periplasm. Its function is as follows. Part of the Tol-Pal system, which plays a role in outer membrane invagination during cell division and is important for maintaining outer membrane integrity. The chain is Tol-Pal system protein TolB from Jannaschia sp. (strain CCS1).